Reading from the N-terminus, the 281-residue chain is MSDRRSIDEVMVRAAKNAKREEKFDLGFFKFISLAGHILESSCKHSEDQEDPSCLKCKYDRELKLEERPEMVFARNSLTIQFGRLGSIEFNALDALKMVCADRLPDVKVGASTVWQSARQDRIQQISEHQKPFDWTYTTHYKGTVTGCQVTPTTERIDMERLKRRDEILFSSSITLFEDELADHGIAQLLARVRVMRGYFFVLLRFYMRVDNVLLRVCDTRIVGNEFDGHVIREWQLREAKYGNLGHVDPEELLDVDRAWMHLPVVEEHFDRVSVDRERLF.

Belongs to the TIP41 family.

In Caenorhabditis elegans, this protein is TIP41-like protein.